The primary structure comprises 283 residues: Cardiolipin synthase (CMP-forming) (283 aa).

3 consecutive transmembrane segments (helical) span residues 83–103 (PFIG…LFAF), 155–175 (VSIA…ALFI), and 209–229 (LSKW…LLLL).

Belongs to the CDP-alcohol phosphatidyltransferase class-I family. May be found in a large complex. The cofactor is Mg(2+).

It is found in the mitochondrion inner membrane. The catalysed reaction is a CDP-1,2-diacyl-sn-glycerol + a 1,2-diacyl-sn-glycero-3-phospho-(1'-sn-glycerol) = a cardiolipin + CMP + H(+). Functionally, catalyzes the synthesis of cardiolipin (CL) (diphosphatidylglycerol) by specifically transferring a phosphatidyl group from CDP-diacylglycerol to phosphatidylglycerol (PG). CL is a key phospholipid in mitochondrial membranes and plays important roles in maintaining the functional integrity and dynamics of mitochondria under both optimal and stress conditions. This chain is Cardiolipin synthase (CMP-forming) (CRD1), found in Saccharomyces cerevisiae (strain ATCC 204508 / S288c) (Baker's yeast).